Reading from the N-terminus, the 530-residue chain is Phosphoenolpyruvate carboxykinase (ATP) (530 aa).

The substrate site is built by arginine 58, tyrosine 195, and lysine 201. ATP-binding positions include lysine 201, histidine 220, and 236–244; that span reads GLSGTGKTT. 2 residues coordinate Mn(2+): lysine 201 and histidine 220. Aspartate 257 serves as a coordination point for Mn(2+). ATP contacts are provided by residues glutamate 285, arginine 321, 440-441, and threonine 446; that span reads RI. Arginine 321 provides a ligand contact to substrate.

The protein belongs to the phosphoenolpyruvate carboxykinase (ATP) family. Requires Mn(2+) as cofactor.

The protein resides in the cytoplasm. The catalysed reaction is oxaloacetate + ATP = phosphoenolpyruvate + ADP + CO2. The protein operates within carbohydrate biosynthesis; gluconeogenesis. In terms of biological role, involved in the gluconeogenesis. Catalyzes the conversion of oxaloacetate (OAA) to phosphoenolpyruvate (PEP) through direct phosphoryl transfer between the nucleoside triphosphate and OAA. In Staphylococcus haemolyticus (strain JCSC1435), this protein is Phosphoenolpyruvate carboxykinase (ATP).